A 341-amino-acid chain; its full sequence is tRNA N6-adenosine threonylcarbamoyltransferase (341 aa).

Histidine 115 and histidine 119 together coordinate Fe cation. Residues 138–142, aspartate 171, glycine 184, aspartate 188, and asparagine 279 each bind substrate; that span reads VVSGG. A Fe cation-binding site is contributed by aspartate 307.

The protein belongs to the KAE1 / TsaD family. Fe(2+) is required as a cofactor.

It localises to the cytoplasm. It carries out the reaction L-threonylcarbamoyladenylate + adenosine(37) in tRNA = N(6)-L-threonylcarbamoyladenosine(37) in tRNA + AMP + H(+). Required for the formation of a threonylcarbamoyl group on adenosine at position 37 (t(6)A37) in tRNAs that read codons beginning with adenine. Is involved in the transfer of the threonylcarbamoyl moiety of threonylcarbamoyl-AMP (TC-AMP) to the N6 group of A37, together with TsaE and TsaB. TsaD likely plays a direct catalytic role in this reaction. The chain is tRNA N6-adenosine threonylcarbamoyltransferase from Clostridium novyi (strain NT).